The following is a 474-amino-acid chain: Immunoglobulin heavy constant mu (474 aa).

The segment at 1 to 105 (GSASAPTLFP…NKEKNVPLPV (105 aa)) is CH1. At 1-450 (GSASAPTLFP…EEGFENLWAT (450 aa)) the chain is on the extracellular side. 4 Ig-like domains span residues 6-102 (PTLF…KNVP), 111-211 (PKVS…QNAS), 229-319 (PSFA…QTIS), and 329-430 (PDVY…RTVD). 2 disulfide bridges follow: Cys28-Cys88 and Cys134-Cys197. Asn46 carries N-linked (GlcNAc...) (complex) asparagine glycosylation. The CH2 stretch occupies residues 106-217 (IAELPPKVSV…QNASSMCVPD (112 aa)). N-linked (GlcNAc...) (complex) asparagine glycosylation is present at Asn209. Residues 218–323 (QDTAIRVFAI…LKQTISRPKG (106 aa)) are CH3. Cystine bridges form between Cys244–Cys303 and Cys351–Cys413. 2 N-linked (GlcNAc...) asparagine glycosylation sites follow: Asn272 and Asn279. The segment at 324-452 (VALHRPDVYL…GFENLWATAS (129 aa)) is CH4. The interval 437-453 (VSADEEGFENLWATAST) is important for IgM oligomerization. Asp440 carries N-linked (GlcNAc...) asparagine glycosylation. Residues 451-471 (ASTFIVLFLLSLFYSTTVTLF) form a helical membrane-spanning segment. Residues 472 to 474 (KVK) lie on the Cytoplasmic side of the membrane.

As to quaternary structure, the basic structural unit of both sIgM and mIgM molecules consists of two identical heavy chains and two identical light chains; disulfide-linked. N-terminal variable regions of the heavy and light chains form the antigen binding sites, whereas the C-terminal constant regions of the heavy chains interact with immune receptors to mediate effector functions. In terms of assembly, part of IgM antibody. Forms high order oligomers, homopentamers stabilized by the JCHAIN and homohexamers that lack JCHAIN. The oligomerization amplifies an inherently low affinity of IgM antibodies for the antigen by multi-point attachment (avidity). Adjacent IgM protomers associate via interchain disulfide links to form an asymmetric pentameric structure with a 50 degree gap. A single copy of JCHAIN is covalently linked to the first and the fifth IgM monomers via interchain disulfide bonds thus closing the pentamer ring. Only JCHAIN-containing IgM binds PIGR secretory component (via D1-CDR1 region); this interaction is a prerequisite for IgM transcytosis across mucosal epithelium. Pentameric sIgM interacts (via CH4 domain) with FCRM (via Ig-like domain); the interaction is glycan-independent and multivalent theoretically involving up to eight binding sites for the IgM pentamer. Interacts with FCAMR; this interaction facilitates the endocytosis of IgM-coated microbes or IgM-antigen immune complexes. Antigen-bound IgM (via the Fc region) binds to globular domains of C1q component of the complement system, all three modules C1QA, C1QB and C1QC being involved in IgM binding; this interaction is multivalent. Pentameric sIgM (via Fc region) interacts with CD5L (via SRCR2) through interchain disulfide-linkages; this interaction protects CD5L from renal excretion and provides for high levels of CD5L in circulation. Part of IgM B cell receptor complex on pre-B cells, immature and mature B cells. The BCR complex consists of one membrane-bound IgM molecule responsible for antigen binding, non-covalently associated with CD79A and CD79B signaling chains. N-glycosylated; important for IgM secretion and its localization at the plasma membrane. The interaction with FCMR is glycan-independent.

The protein localises to the secreted. The protein resides in the cell membrane. Constant region of immunoglobulin heavy chains. Immunoglobulins, also known as antibodies, are membrane-bound or secreted glycoproteins produced by B lymphocytes. In the recognition phase of humoral immunity, the membrane-bound immunoglobulins serve as receptors which, upon binding of a specific antigen, trigger the clonal expansion and differentiation of B lymphocytes into immunoglobulins-secreting plasma cells. Secreted immunoglobulins mediate the effector phase of humoral immunity, which results in the elimination of bound antigens. The antigen binding site is formed by the variable domain of one heavy chain, together with that of its associated light chain. Thus, each immunoglobulin has two antigen binding sites with remarkable affinity for a particular antigen. The variable domains are assembled by a process called V-(D)-J rearrangement and can then be subjected to somatic hypermutations which, after exposure to antigen and selection, allow affinity maturation for a particular antigen. In terms of biological role, constant region of secreted IgM (sIgM), also known as the Fc region of IgM antibody. Able to multimerize, forms high order polymers, mainly pentamers and occasionally hexamers, providing for multivalency and high avidity recognition of antigens. Natural sIgM are polyreactive and recognize conserved self- and pathogen-derived structures, whereas immune sIgM are secreted only upon exposure to pathogens and are antigen-specific. Both natural and immune sIgM are required for an efficient humoral immune response to infection. Mediates sIgM effector functions mostly via Fc receptors and the complement system. On lymphoid cells binds high-affinity Fc receptor FCMR and promotes induction of an efficient neutralizing IgG response while maintaining tolerance to self-antigens. Recruits C1q complement component to initiate the classical complement pathway, facilitating the recognition and neutralization of pathogens by the host. Together with C1q and mannose-binding lectin promotes the phagocytosis of apoptotic cells by macrophages, ensuring the clearance of potential autoimmune epitopes from tissues. Involved in mucosal immunity. It is transported by transcytosis across mucosal epithelium by PIGR and secreted on the apical side in complex with PIGR secretory component to scan mucosal lining for pathogens. IgM-antigen complexes undergo FCMR-mediated retrotranscytosis across mucosal M cells toward antigen-presenting cells in mucosal lymphoid tissues. Functionally, constant region of membrane-bound IgM, part of the B cell receptor complex (BCR). IgM BCR provides constitutive tonic signaling for B cell survival. Mediates pre-BCR signaling that regulates B cell selection and rearrangement of Ig genes via allelic exclusion. The polypeptide is Immunoglobulin heavy constant mu (Homo sapiens (Human)).